A 497-amino-acid chain; its full sequence is Glycerol kinase (497 aa).

Thr-12 contacts ADP. Residues Thr-12, Thr-13, and Ser-14 each contribute to the ATP site. Thr-12 serves as a coordination point for sn-glycerol 3-phosphate. Arg-16 contacts ADP. Residues Arg-82, Glu-83, Tyr-134, and Asp-243 each coordinate sn-glycerol 3-phosphate. Glycerol contacts are provided by Arg-82, Glu-83, Tyr-134, Asp-243, and Gln-244. Residues Thr-265 and Gly-308 each contribute to the ADP site. Thr-265, Gly-308, Gln-312, and Gly-409 together coordinate ATP. 2 residues coordinate ADP: Gly-409 and Asn-413.

The protein belongs to the FGGY kinase family.

It catalyses the reaction glycerol + ATP = sn-glycerol 3-phosphate + ADP + H(+). It participates in polyol metabolism; glycerol degradation via glycerol kinase pathway; sn-glycerol 3-phosphate from glycerol: step 1/1. Its activity is regulated as follows. Inhibited by fructose 1,6-bisphosphate (FBP). Key enzyme in the regulation of glycerol uptake and metabolism. Catalyzes the phosphorylation of glycerol to yield sn-glycerol 3-phosphate. This Nitratidesulfovibrio vulgaris (strain ATCC 29579 / DSM 644 / CCUG 34227 / NCIMB 8303 / VKM B-1760 / Hildenborough) (Desulfovibrio vulgaris) protein is Glycerol kinase.